The chain runs to 693 residues: Adhesion G-protein coupled receptor G1 (693 aa).

The N-terminal stretch at Met-1–Gly-25 is a signal peptide. Arg-26–Arg-33 serves as a coordination point for heparin. The Extracellular segment spans residues Arg-26–His-401. Disulfide bonds link Cys-35-Cys-91 and Cys-121-Cys-177. Asn-39, Asn-148, and Asn-171 each carry an N-linked (GlcNAc...) asparagine glycan. Leu-190–Pro-200 serves as a coordination point for heparin. The GAIN-B domain maps to Asp-224–Val-395. N-linked (GlcNAc...) asparagine glycans are attached at residues Asn-234, Asn-303, Asn-324, and Asn-341. Intrachain disulfides connect Cys-346/Cys-377 and Cys-366/Cys-379. Positions Cys-346–Val-395 are GPS. The segment at Tyr-384–Ala-397 is stachel. Residues Tyr-402–Ala-424 form a helical membrane-spanning segment. Residues Tyr-425–Lys-437 lie on the Cytoplasmic side of the membrane. Residues Pro-438–Phe-460 form a helical membrane-spanning segment. Over Leu-461–Pro-465 the chain is Extracellular. The chain crosses the membrane as a helical span at residues Val-466 to Leu-495. A disulfide bond links Cys-475 and Cys-562. Over Glu-496–Thr-510 the chain is Cytoplasmic. Residues Tyr-511–Leu-533 form a helical membrane-spanning segment. The Extracellular portion of the chain corresponds to Val-534–Cys-562. Residues Trp-563 to Met-588 form a helical membrane-spanning segment. Residues Leu-589–His-602 lie on the Cytoplasmic side of the membrane. The helical transmembrane segment at Thr-603–Ala-624 threads the bilayer. The Extracellular segment spans residues Leu-625–Phe-628. Residues Ser-629–Ile-654 traverse the membrane as a helical segment. The Cytoplasmic segment spans residues Phe-655–Ile-693. The segment at Ser-670 to Ile-693 is disordered. Positions Ser-684–Ile-693 are enriched in low complexity.

It belongs to the G-protein coupled receptor 2 family. LN-TM7 subfamily. In terms of assembly, heterodimer of 2 chains generated by proteolytic processing; the large extracellular N-terminal fragment (ADGRG1 NT) and the membrane-bound C-terminal fragment (ADGRG1-CT) predominantly remain associated and non-covalently linked. ADGRG1 NT self-associates in a trans-trans manner; the homophilic interaction enhances receptor signaling. Interacts with TGM2. Interacts with heparin; leading to the reduction of ADGRG1 shedding. Interacts with COL3A1. Part of a GPCR-tetraspanin complex at least consisting of ADGRG1, CD81, eventually CD9, and GNA11 in which CD81 is enhancing the association of ADGRG1 with GNA11. In terms of processing, autoproteolytically cleaved into 2 fragments; the large extracellular N-terminal fragment (ADGRG1 NT) and the membrane-bound C-terminal fragment (ADGRG1 CT) predominantly remain associated and non-covalently linked. Shedding to yield the secreted ADGRG1 N-terminal fragment seems to involve metalloprotease(s). Post-translationally, N-glycosylated. Contains sialic acid residues. Ubiquitinated. Undergoes polyubiquitination upon activation. Widely distributed with highest levels found in thyroid gland, brain and heart. Expressed in a great number of tumor cells. Expression is down-regulated in different tumors from highly metastatic cells.

It localises to the cell membrane. The protein localises to the secreted. It is found in the membrane raft. Forms a heterodimer of 2 chains generated by proteolytic processing that remain associated through non-covalent interactions mediated by the GAIN-B domain. In the inactivated receptor, the Stachel sequence (also named stalk) is embedded in the GAIN-B domain, where it adopts a beta-strand conformation. On activation, the Stachel moves into the 7 transmembrane region and adopts a twisted hook-shaped configuration that forms contacts within the receptor, leading to coupling of a G-alpha protein, which activates signaling. The cleaved GAIN-B and N-terminal domains can then dissociate from the rest of the receptor. Adhesion G-protein coupled receptor (aGPCR) for steroid hormone 17alpha-hydroxypregnenolone (17-OH), which is involved in cell adhesion and cell-cell interactions. Ligand binding causes a conformation change that triggers signaling via guanine nucleotide-binding proteins (G proteins) and modulates the activity of downstream effectors, such as RhoA pathway. ADGRG1 is coupled to G(12) and/or G(13) G proteins (GNA12 and GNA13, respectively) and mediates the activation Rho small GTPases. Acts as a potent suppressor of ferroptosis: binding to 17-OH-binding initiates signaling that down-regulates CD36 and alleviates ferroptosis-induced liver injury. Ligand-binding also induces cell adhesion activity via association with proteins such as collagen III/COL3A1 and TGM2. Mediates cell matrix adhesion in developing neurons and hematopoietic stem cells. Involved in cortical development, specifically in maintenance of the pial basement membrane integrity and in cortical lamination: association with COL3A1 in the developing brain inhibits neuronal migration via activation of the RhoA pathway. Together with TGM2, acts as a regulator of myelination and myelin repair in oligodendrocyte precursor cells. Acts as a hemostatic sensor of shear force: G protein-coupled receptor signaling is activated in response to shear force in platelets, promoting G(13) G protein signaling, and platelet shape change and aggregation in a COL3A1-dependent manner. Acts as an inhibitor of VEGFA production thereby inhibiting angiogenesis through a signaling pathway mediated by PRKCA. Plays a role in the maintenance of hematopoietic stem cells in bone marrow niche. Plays an essential role in testis development. The sequence is that of Adhesion G-protein coupled receptor G1 from Homo sapiens (Human).